The chain runs to 296 residues: Bifunctional protein FolD (296 aa).

Residues 166–168 (GRS), Ser-191, and Ile-232 contribute to the NADP(+) site.

The protein belongs to the tetrahydrofolate dehydrogenase/cyclohydrolase family. In terms of assembly, homodimer.

The enzyme catalyses (6R)-5,10-methylene-5,6,7,8-tetrahydrofolate + NADP(+) = (6R)-5,10-methenyltetrahydrofolate + NADPH. It catalyses the reaction (6R)-5,10-methenyltetrahydrofolate + H2O = (6R)-10-formyltetrahydrofolate + H(+). Its pathway is one-carbon metabolism; tetrahydrofolate interconversion. Catalyzes the oxidation of 5,10-methylenetetrahydrofolate to 5,10-methenyltetrahydrofolate and then the hydrolysis of 5,10-methenyltetrahydrofolate to 10-formyltetrahydrofolate. The sequence is that of Bifunctional protein FolD from Cereibacter sphaeroides (strain ATCC 17029 / ATH 2.4.9) (Rhodobacter sphaeroides).